Reading from the N-terminus, the 184-residue chain is Probable chemoreceptor glutamine deamidase CheD (184 aa).

The protein belongs to the CheD family.

The enzyme catalyses L-glutaminyl-[protein] + H2O = L-glutamyl-[protein] + NH4(+). Probably deamidates glutamine residues to glutamate on methyl-accepting chemotaxis receptors (MCPs), playing an important role in chemotaxis. In Rhizobium johnstonii (strain DSM 114642 / LMG 32736 / 3841) (Rhizobium leguminosarum bv. viciae), this protein is Probable chemoreceptor glutamine deamidase CheD.